Here is a 695-residue protein sequence, read N- to C-terminus: Lupanine 17-hydroxylase [cytochrome c] (695 aa).

The signal sequence occupies residues 1 to 26 (MSANKNIWIIRLGVAFVCVAIGAAQA). The 80-residue stretch at 598-677 (AMAESGRHIF…ALQAFILQKA (80 aa)) folds into the Cytochrome c domain. Heme c is bound by residues Cys612, Cys615, and His616.

This sequence belongs to the bacterial PQQ dehydrogenase family. Monomer. It depends on pyrroloquinoline quinone as a cofactor. Requires heme c as cofactor.

Its subcellular location is the periplasm. It catalyses the reaction lupanine + 2 Fe(III)-[cytochrome c] + H2O = 17-hydroxylupanine + 2 Fe(II)-[cytochrome c] + 2 H(+). Its function is as follows. Catalyzes the first reaction in the catabolism of the alkaloid lupanine. It dehydrogenates lupanine, which can then be hydrated to produce 17-hydroxylupanine. The polypeptide is Lupanine 17-hydroxylase [cytochrome c] (luh) (Pseudomonas sp).